The chain runs to 188 residues: uncharacterized protein (188 aa).

An N-terminal signal peptide occupies residues 1–23 (MFKGQKTLAALAVSLLFTAPVYA). Cysteines 42 and 81 form a disulfide.

This sequence belongs to the fimbrial protein family.

Its subcellular location is the fimbrium. This is an uncharacterized protein from Escherichia coli (strain K12).